We begin with the raw amino-acid sequence, 106 residues long: Large ribosomal subunit protein uL30 (106 aa).

This sequence belongs to the universal ribosomal protein uL30 family. Part of the 50S ribosomal subunit.

The sequence is that of Large ribosomal subunit protein uL30 from Ruthia magnifica subsp. Calyptogena magnifica.